The primary structure comprises 676 residues: RNA helicase NPH-II (676 aa).

The Helicase ATP-binding domain occupies 172–347 (FSAWISHRPV…VFLPNPAFIH (176 aa)). Residue 185–192 (GGTGVGKT) coordinates ATP. Positions 296 to 299 (DEVH) match the DEXH box motif. One can recognise a Helicase C-terminal domain in the interval 366 to 542 (NPSSRMAYIE…KFNLTLPEDL (177 aa)).

Belongs to the DEAD box helicase family. DEAH subfamily. In terms of assembly, monomer.

Its subcellular location is the virion. The enzyme catalyses ATP + H2O = ADP + phosphate + H(+). Its function is as follows. NTP-dependent helicase that catalyzes unidirectional unwinding of 3'tailed duplex RNAs and plays an important role during transcription of early mRNAs, presumably by preventing R-loop formation behind the elongating RNA polymerase. Might also play a role in the export of newly synthesized mRNA chains out of the core into the cytoplasm. Required for replication and propagation of viral particles. The sequence is that of RNA helicase NPH-II (OPG084) from Homo sapiens (Human).